The primary structure comprises 408 residues: Bone morphogenetic protein 4 (408 aa).

The first 19 residues, 1-19 (MIPGNRMLMVVLLCQVLLG), serve as a signal peptide directing secretion. Residues 20–292 (GASHASLIPE…HTLTRRRAKR (273 aa)) constitute a propeptide that is removed on maturation. Ser-91 is subject to Phosphoserine. A disordered region spans residues 91–111 (SGEEEEEEQSQGTGLEYPERP). N-linked (GlcNAc...) asparagine glycosylation is found at Asn-144 and Asn-209. Residues 281 to 307 (RGHTLTRRRAKRSPKHHPQRSRKKNKN) form a disordered region. Over residues 284–307 (TLTRRRAKRSPKHHPQRSRKKNKN) the composition is skewed to basic residues. 3 disulfides stabilise this stretch: Cys-308/Cys-373, Cys-337/Cys-405, and Cys-341/Cys-407. 2 N-linked (GlcNAc...) asparagine glycosylation sites follow: Asn-350 and Asn-365.

It belongs to the TGF-beta family. Homodimer; disulfide-linked. Interacts with SOSTDC1, GREM2, RGMA, RGMB and RGMC. Part of a complex consisting of TWSG1 and CHRD. Interacts with the serine proteases, HTRA1 and HTRA3; the interaction with either inhibits BMP4-mediated signaling. The HTRA protease activity is required for this inhibition. Interacts with FBN1 (via N-terminal domain) and FBN2. Interacts with type I receptor BMPR1A. Interacts with type II receptor BMPR2. Interacts with FSTL1; this interaction inhibits the activation of the BMP4/Smad1/5/8 signaling pathway. Interacts with SCUBE3. Interacts with TGFBR3. As to expression, in the cochlea, detected in nonprosensory regions and outer sulcus (at protein level). Prior to gastrulation, expressed in the extraembryonic ectoderm. Later, expressed in the extraembryonic mesoderm.

It is found in the secreted. The protein resides in the extracellular space. The protein localises to the extracellular matrix. Its function is as follows. Growth factor of the TGF-beta superfamily that plays essential roles in many developmental processes, including neurogenesis, vascular development, angiogenesis and osteogenesis. Acts in concert with PTHLH/PTHRP to stimulate ductal outgrowth during embryonic mammary development and to inhibit hair follicle induction. Initiates the canonical BMP signaling cascade by associating with type I receptor BMPR1A and type II receptor BMPR2. Once all three components are bound together in a complex at the cell surface, BMPR2 phosphorylates and activates BMPR1A. In turn, BMPR1A propagates signal by phosphorylating SMAD1/5/8 that travel to the nucleus and act as activators and repressors of transcription of target genes. Positively regulates the expression of odontogenic development regulator MSX1 via inducing the IPO7-mediated import of SMAD1 to the nucleus. Required for MSX1-mediated mesenchymal molar tooth bud development beyond the bud stage, via promoting Wnt signaling. Acts as a positive regulator of odontoblast differentiation during mesenchymal tooth germ formation, expression is repressed during the bell stage by MSX1-mediated inhibition of CTNNB1 signaling. Able to induce its own expression in dental mesenchymal cells and also in the neighboring dental epithelial cells via an MSX1-mediated pathway. Can also signal through non-canonical BMP pathways such as ERK/MAP kinase, PI3K/Akt or SRC cascades. For example, induces SRC phosphorylation which, in turn, activates VEGFR2, leading to an angiogenic response. This is Bone morphogenetic protein 4 from Mus musculus (Mouse).